Consider the following 98-residue polypeptide: NADH-ubiquinone oxidoreductase chain 4L (98 aa).

The next 3 helical transmembrane spans lie at 1–21 (MPSIYINIFLAFILALLGMLV), 29–49 (SLLCLEGMMLSLFVLITLTAL), and 61–81 (IILLVFAACEAAVGLALLVMV).

Belongs to the complex I subunit 4L family. In terms of assembly, core subunit of respiratory chain NADH dehydrogenase (Complex I) which is composed of 45 different subunits.

Its subcellular location is the mitochondrion inner membrane. The enzyme catalyses a ubiquinone + NADH + 5 H(+)(in) = a ubiquinol + NAD(+) + 4 H(+)(out). Its function is as follows. Core subunit of the mitochondrial membrane respiratory chain NADH dehydrogenase (Complex I) which catalyzes electron transfer from NADH through the respiratory chain, using ubiquinone as an electron acceptor. Part of the enzyme membrane arm which is embedded in the lipid bilayer and involved in proton translocation. This is NADH-ubiquinone oxidoreductase chain 4L (MT-ND4L) from Oryctolagus cuniculus (Rabbit).